The primary structure comprises 124 residues: Transcription initiation factor TFIID subunit 13 (124 aa).

Residues 1–16 are compositionally biased toward acidic residues; the sequence is MADEEEDPTFEEENEE. The interval 1-28 is disordered; that stretch reads MADEEEDPTFEEENEEIGGGAEGGQGKR. The region spanning 32–74 is the Histone-fold domain; sequence FSKELRCMMYGFGDDQNPYTESVDILEDLVIEFITEMTHKAMS.

Belongs to the TAF13 family. As to quaternary structure, component of the TFIID basal transcription factor complex, composed of TATA-box-binding protein TBP, and a number of TBP-associated factors (TAFs), including TAF1, TAF2, TAF3, TAF4, TAF5, TAF6, TAF7, TAF8, TAF9, TAF10, TAF11, TAF12 and TAF13. Interacts with TBP, and more strongly with TAF10 and TAF11.

Its subcellular location is the nucleus. Its function is as follows. The TFIID basal transcription factor complex plays a major role in the initiation of RNA polymerase II (Pol II)-dependent transcription. TFIID recognizes and binds promoters via its subunit TBP, a TATA-box-binding protein, and promotes assembly of the pre-initiation complex (PIC). The TFIID complex consists of TBP and TBP-associated factors (TAFs), including TAF1, TAF2, TAF3, TAF4, TAF5, TAF6, TAF7, TAF8, TAF9, TAF10, TAF11, TAF12 and TAF13. TAF13, together with TAF11 and TBP, play key roles during promoter binding by the TFIID and TFIIA transcription factor complexes. The chain is Transcription initiation factor TFIID subunit 13 from Bos taurus (Bovine).